A 586-amino-acid chain; its full sequence is Clathrin heavy chain linker domain-containing protein 1 (586 aa).

Residues 174 to 232 adopt a coiled-coil conformation; the sequence is MNLDALTKYMKHLEDKYAEIKQAMLIKYVPAQRKSDLDEEMIVLLKRRDVAENLNRKLQ.

The sequence is that of Clathrin heavy chain linker domain-containing protein 1 (CLHC1) from Macaca fascicularis (Crab-eating macaque).